Reading from the N-terminus, the 101-residue chain is Ubiquitin-related modifier 1 (101 aa).

1-thioglycine is present on Gly-101. Gly-101 participates in a covalent cross-link: Glycyl lysine isopeptide (Gly-Lys) (interchain with K-? in acceptor proteins).

This sequence belongs to the URM1 family. C-terminal thiocarboxylation occurs in 2 steps, it is first acyl-adenylated (-COAMP) via the hesA/moeB/thiF part of the MOCS3 homolog, then thiocarboxylated (-COSH) via the rhodanese domain of the MOCS3 homolog.

It localises to the cytoplasm. It participates in tRNA modification; 5-methoxycarbonylmethyl-2-thiouridine-tRNA biosynthesis. Functionally, acts as a sulfur carrier required for 2-thiolation of mcm(5)S(2)U at tRNA wobble positions of cytosolic tRNA(Lys), tRNA(Glu) and tRNA(Gln). Serves as sulfur donor in tRNA 2-thiolation reaction by being thiocarboxylated (-COSH) at its C-terminus by MOCS3. The sulfur is then transferred to tRNA to form 2-thiolation of mcm(5)S(2)U. Also acts as a ubiquitin-like protein (UBL) that is covalently conjugated via an isopeptide bond to lysine residues of target proteins. The thiocarboxylated form serves as substrate for conjugation and oxidative stress specifically induces the formation of UBL-protein conjugates. The sequence is that of Ubiquitin-related modifier 1 from Gallus gallus (Chicken).